The sequence spans 321 residues: Phospho-N-acetylmuramoyl-pentapeptide-transferase (321 aa).

9 consecutive transmembrane segments (helical) span residues 1–21 (MSLLVWGATLISGFIIVFALM), 53–73 (TMGGLLFIIAILVTTLWVGGW), 77–97 (LQPTTWILMFILVLYGALGFW), 110–130 (GLKAWQKLLGQVIGAVILTLV), 145–165 (LGVWSLGIWYMLFAIIWLVGF), 174–194 (GLDGLVAGQATIAFGAYAVIA), 200–220 (YNVMLFCLAVVGSLLGFFVYN), 226–248 (IFMGDMGSLALGGALAAVSILLH), and 301–321 (IDIVFWSIGLVAAVISVATII).

The protein belongs to the glycosyltransferase 4 family. MraY subfamily. Requires Mg(2+) as cofactor.

Its subcellular location is the cell membrane. The enzyme catalyses UDP-N-acetyl-alpha-D-muramoyl-L-alanyl-gamma-D-glutamyl-L-lysyl-D-alanyl-D-alanine + di-trans,octa-cis-undecaprenyl phosphate = Mur2Ac(oyl-L-Ala-gamma-D-Glu-L-Lys-D-Ala-D-Ala)-di-trans,octa-cis-undecaprenyl diphosphate + UMP. The protein operates within cell wall biogenesis; peptidoglycan biosynthesis. Its function is as follows. Catalyzes the initial step of the lipid cycle reactions in the biosynthesis of the cell wall peptidoglycan: transfers peptidoglycan precursor phospho-MurNAc-pentapeptide from UDP-MurNAc-pentapeptide onto the lipid carrier undecaprenyl phosphate, yielding undecaprenyl-pyrophosphoryl-MurNAc-pentapeptide, known as lipid I. The chain is Phospho-N-acetylmuramoyl-pentapeptide-transferase from Lactiplantibacillus plantarum (strain ATCC BAA-793 / NCIMB 8826 / WCFS1) (Lactobacillus plantarum).